The chain runs to 157 residues: Transmembrane protein 42 (157 aa).

4 helical membrane-spanning segments follow: residues 37–57 (FWGV…AAAA), 67–87 (IGLC…MWTF), 100–120 (IASV…GYLL), and 124–144 (CQEI…TLIH).

It is found in the membrane. The polypeptide is Transmembrane protein 42 (Tmem42) (Mus musculus (Mouse)).